Consider the following 439-residue polypeptide: Trigger factor (439 aa).

A PPIase FKBP-type domain is found at 170-255 (GDTVVIDFDG…IHELKKLETP (86 aa)).

It belongs to the FKBP-type PPIase family. Tig subfamily.

Its subcellular location is the cytoplasm. It catalyses the reaction [protein]-peptidylproline (omega=180) = [protein]-peptidylproline (omega=0). Involved in protein export. Acts as a chaperone by maintaining the newly synthesized protein in an open conformation. Functions as a peptidyl-prolyl cis-trans isomerase. The chain is Trigger factor from Oenococcus oeni (strain ATCC BAA-331 / PSU-1).